A 448-amino-acid chain; its full sequence is Na(+)-malate symporter (448 aa).

A run of 11 helical transmembrane segments spans residues 31 to 51, 60 to 80, 86 to 106, 123 to 143, 153 to 173, 182 to 202, 214 to 234, 276 to 293, 297 to 319, 333 to 353, and 359 to 379; these read IGVI…LAAY, LGGF…GQRI, IGGP…YNVL, FLYF…NRIV, VPLV…GFIF, FFVV…PLSI, VFVS…IICA, LMGA…FGGL, FIFI…ANIL, FISS…FIPL, and VISI…IGSG.

This sequence belongs to the 2-hydroxycarboxylate transporter (2-HCT) (TC 2.A.24) family.

It localises to the cell membrane. Its function is as follows. Acts as a Na(+)-malate symporter, as it catalyzes malate-dependent uptake of Na(+) and Na(+)-dependent uptake of malate. The protein is Na(+)-malate symporter of Bacillus subtilis (strain 168).